The primary structure comprises 341 residues: tRNA N6-adenosine threonylcarbamoyltransferase (341 aa).

The Fe cation site is built by histidine 111 and histidine 115. Residues leucine 134–glycine 138, aspartate 167, glycine 180, and asparagine 276 contribute to the substrate site. Aspartate 304 contacts Fe cation.

The protein belongs to the KAE1 / TsaD family. Fe(2+) serves as cofactor.

It localises to the cytoplasm. The catalysed reaction is L-threonylcarbamoyladenylate + adenosine(37) in tRNA = N(6)-L-threonylcarbamoyladenosine(37) in tRNA + AMP + H(+). Functionally, required for the formation of a threonylcarbamoyl group on adenosine at position 37 (t(6)A37) in tRNAs that read codons beginning with adenine. Is involved in the transfer of the threonylcarbamoyl moiety of threonylcarbamoyl-AMP (TC-AMP) to the N6 group of A37, together with TsaE and TsaB. TsaD likely plays a direct catalytic role in this reaction. The polypeptide is tRNA N6-adenosine threonylcarbamoyltransferase (Ectopseudomonas mendocina (strain ymp) (Pseudomonas mendocina)).